The chain runs to 584 residues: N(6)-adenosine-methyltransferase subunit METTL3 (584 aa).

Disordered stretches follow at residues 1–65 (MSDT…EHPP) and 162–221 (KADD…SNKV). Residues 187–204 (RKSSVSLATASISQLTAS) show a composition bias toward polar residues. The Nuclear localization signal motif lies at 213–220 (DKKGRSNK). Residues 381 to 382 (DI) and Asp-399 contribute to the S-adenosyl-L-methionine site. The interval 400-414 (PPWDIHMELPYGTLT) is gate loop 1. Interaction with METTL14 regions lie at residues 454–458 (DRVDE) and 468–484 (QRII…NHGK). Positions 466 to 483 (QLQRIIRTGRTGHWLNHG) are interphase loop. Residues 469 to 482 (RIIRTGRTGHWLNH) form a positively charged region required for RNA-binding region. The gate loop 2 stretch occupies residues 511-519 (VRSTSHKPD). Residues Lys-517, 540-543 (RPHN), and 553-554 (NQ) contribute to the S-adenosyl-L-methionine site.

The protein belongs to the MT-A70-like family. As to quaternary structure, heterodimer; heterodimerizes with mettl14 to form an antiparallel heterodimer that constitutes an active methyltransferase. Component of the WMM complex, a N6-methyltransferase complex composed of a catalytic subcomplex, named MAC, and of an associated subcomplex, named MACOM. The MAC subcomplex is composed of mettl3 and mettl14. As to expression, expressed in the hemato-vascular system: enriched in sorted endothelial cells and haemogenic endothelium.

Its subcellular location is the nucleus. The protein resides in the nucleus speckle. The protein localises to the cytoplasm. It carries out the reaction an adenosine in mRNA + S-adenosyl-L-methionine = an N(6)-methyladenosine in mRNA + S-adenosyl-L-homocysteine + H(+). In terms of biological role, the METTL3-METTL14 heterodimer forms a N6-methyltransferase complex that methylates adenosine residues at the N(6) position of some RNAs and regulates various processes such as the circadian clock, differentiation of embryonic and hematopoietic stem cells, cortical neurogenesis, response to DNA damage, differentiation of T-cells and primary miRNA processing. In the heterodimer formed with mettl14, mettl3 constitutes the catalytic core. N6-methyladenosine (m6A), which takes place at the 5'-[AG]GAC-3' consensus sites of some mRNAs, plays a role in mRNA stability, processing and translation efficiency. M6A is also involved in hematopoietic stem cells specification: m6A methylation and subsequent destabilization of mRNAs, such as notch1a, leads to decreased Notch signaling, promoting endothelial to hematopoietic transition. M6A also takes place in other RNA molecules, such as primary miRNA (pri-miRNAs). Mediates methylation of pri-miRNAs. This Danio rerio (Zebrafish) protein is N(6)-adenosine-methyltransferase subunit METTL3.